Consider the following 499-residue polypeptide: Glycerol kinase (499 aa).

Thr-12 provides a ligand contact to ADP. ATP contacts are provided by Thr-12, Thr-13, and Ser-14. Thr-12 is a sn-glycerol 3-phosphate binding site. An ADP-binding site is contributed by Arg-16. Arg-82, Glu-83, and Tyr-134 together coordinate sn-glycerol 3-phosphate. Arg-82, Glu-83, and Tyr-134 together coordinate glycerol. The residue at position 230 (His-230) is a Phosphohistidine; by HPr. Asp-244 contributes to the sn-glycerol 3-phosphate binding site. Residues Asp-244 and Gln-245 each contribute to the glycerol site. Residues Thr-266 and Gly-309 each coordinate ADP. The ATP site is built by Thr-266, Gly-309, Gln-313, and Gly-410. ADP is bound by residues Gly-410 and Asn-414.

Belongs to the FGGY kinase family. Homotetramer and homodimer (in equilibrium). The phosphoenolpyruvate-dependent sugar phosphotransferase system (PTS), including enzyme I, and histidine-containing protein (HPr) are required for the phosphorylation, which leads to the activation of the enzyme.

The enzyme catalyses glycerol + ATP = sn-glycerol 3-phosphate + ADP + H(+). It functions in the pathway polyol metabolism; glycerol degradation via glycerol kinase pathway; sn-glycerol 3-phosphate from glycerol: step 1/1. Activated by phosphorylation and inhibited by fructose 1,6-bisphosphate (FBP). Its function is as follows. Key enzyme in the regulation of glycerol uptake and metabolism. Catalyzes the phosphorylation of glycerol to yield sn-glycerol 3-phosphate. In Staphylococcus epidermidis (strain ATCC 12228 / FDA PCI 1200), this protein is Glycerol kinase.